Reading from the N-terminus, the 22-residue chain is Major outer membrane protein (22 aa).

Belongs to the Gram-negative porin family. As to quaternary structure, disulfide bond interactions within and between MOMP molecules and other components form high molecular-weight oligomers.

It is found in the cell outer membrane. Its function is as follows. Structural rigidity of the outer membrane of elementary bodies and porin forming, permitting diffusion of solutes through the intracellular reticulate body membrane. The protein is Major outer membrane protein (ompH) of Avibacterium gallinarum (Pasteurella gallinarum).